Here is an 83-residue protein sequence, read N- to C-terminus: Cell division topological specificity factor (83 aa).

This sequence belongs to the MinE family.

In terms of biological role, prevents the cell division inhibition by proteins MinC and MinD at internal division sites while permitting inhibition at polar sites. This ensures cell division at the proper site by restricting the formation of a division septum at the midpoint of the long axis of the cell. This is Cell division topological specificity factor from Buchnera aphidicola subsp. Schizaphis graminum (strain Sg).